The sequence spans 379 residues: UDP-N-acetylglucosamine--N-acetylmuramyl-(pentapeptide) pyrophosphoryl-undecaprenol N-acetylglucosamine transferase (379 aa).

Residues 17-19 (TGG), asparagine 128, arginine 169, serine 197, and glutamine 298 contribute to the UDP-N-acetyl-alpha-D-glucosamine site.

It belongs to the glycosyltransferase 28 family. MurG subfamily.

The protein resides in the cell inner membrane. It catalyses the reaction di-trans,octa-cis-undecaprenyl diphospho-N-acetyl-alpha-D-muramoyl-L-alanyl-D-glutamyl-meso-2,6-diaminopimeloyl-D-alanyl-D-alanine + UDP-N-acetyl-alpha-D-glucosamine = di-trans,octa-cis-undecaprenyl diphospho-[N-acetyl-alpha-D-glucosaminyl-(1-&gt;4)]-N-acetyl-alpha-D-muramoyl-L-alanyl-D-glutamyl-meso-2,6-diaminopimeloyl-D-alanyl-D-alanine + UDP + H(+). The protein operates within cell wall biogenesis; peptidoglycan biosynthesis. In terms of biological role, cell wall formation. Catalyzes the transfer of a GlcNAc subunit on undecaprenyl-pyrophosphoryl-MurNAc-pentapeptide (lipid intermediate I) to form undecaprenyl-pyrophosphoryl-MurNAc-(pentapeptide)GlcNAc (lipid intermediate II). The sequence is that of UDP-N-acetylglucosamine--N-acetylmuramyl-(pentapeptide) pyrophosphoryl-undecaprenol N-acetylglucosamine transferase from Brucella abortus (strain S19).